Reading from the N-terminus, the 338-residue chain is Lipoate-protein ligase A (338 aa).

Residues 29 to 216 (PATQRVLFLW…AFFAHYGERV (188 aa)) enclose the BPL/LPL catalytic domain. Residues Arg71, 76–79 (GAVF), and Lys134 contribute to the ATP site. Residue Lys134 participates in (R)-lipoate binding.

This sequence belongs to the LplA family. As to quaternary structure, monomer.

The protein resides in the cytoplasm. The enzyme catalyses L-lysyl-[lipoyl-carrier protein] + (R)-lipoate + ATP = N(6)-[(R)-lipoyl]-L-lysyl-[lipoyl-carrier protein] + AMP + diphosphate + H(+). The protein operates within protein modification; protein lipoylation via exogenous pathway; protein N(6)-(lipoyl)lysine from lipoate: step 1/2. It functions in the pathway protein modification; protein lipoylation via exogenous pathway; protein N(6)-(lipoyl)lysine from lipoate: step 2/2. Its function is as follows. Catalyzes both the ATP-dependent activation of exogenously supplied lipoate to lipoyl-AMP and the transfer of the activated lipoyl onto the lipoyl domains of lipoate-dependent enzymes. In Escherichia fergusonii (strain ATCC 35469 / DSM 13698 / CCUG 18766 / IAM 14443 / JCM 21226 / LMG 7866 / NBRC 102419 / NCTC 12128 / CDC 0568-73), this protein is Lipoate-protein ligase A.